The chain runs to 393 residues: Mitogen-activated protein kinase homolog NTF4 (393 aa).

The interval 1–32 (MDGPAHQTDTVMSDAAGQQPAPPSQPVAGIDN) is disordered. Residues 60–345 (KPPIMPIGKG…VEDALAHPYL (286 aa)) enclose the Protein kinase domain. Residues 66 to 74 (IGKGAYGIV) and Lys89 each bind ATP. The Proton acceptor role is filled by Asp186. Thr218 bears the Phosphothreonine mark. The TXY motif lies at 218-220 (TEY). The residue at position 220 (Tyr220) is a Phosphotyrosine.

It belongs to the protein kinase superfamily. CMGC Ser/Thr protein kinase family. MAP kinase subfamily. The cofactor is Mg(2+). Dually phosphorylated on Thr-218 and Tyr-220, which activates the enzyme. Very low autophosphorylation, although dramatically increased when Mn(2+) is added to the reaction instead of Mg(2+).

The catalysed reaction is L-seryl-[protein] + ATP = O-phospho-L-seryl-[protein] + ADP + H(+). It catalyses the reaction L-threonyl-[protein] + ATP = O-phospho-L-threonyl-[protein] + ADP + H(+). With respect to regulation, activated by tyrosine and threonine phosphorylation. This chain is Mitogen-activated protein kinase homolog NTF4 (NTF4), found in Nicotiana tabacum (Common tobacco).